A 220-amino-acid chain; its full sequence is Probable pterin-4-alpha-carbinolamine dehydratase, chloroplastic (220 aa).

The N-terminal 50 residues, 1–50, are a transit peptide targeting the chloroplast; the sequence is MAATSSSPPCNISASSLLLRQPSRSILKVFGLLPPVSRNNRKLGRLTVTR.

The protein belongs to the pterin-4-alpha-carbinolamine dehydratase family. In terms of assembly, interacts with SDIR1. Interacts with AIRP2. Post-translationally, ubiquitinated by SDIR1. Ubiquitination leads to its subsequent degradation, thus controlling abscisic acid (ABA) signaling. Ubiquitinated by AIRP2. Ubiquitination leads to its subsequent degradation, thus controlling abscisic acid (ABA) signaling during drought stress.

The protein localises to the plastid. The protein resides in the chloroplast. Its subcellular location is the cell membrane. It is found in the nucleus. The catalysed reaction is (4aS,6R)-4a-hydroxy-L-erythro-5,6,7,8-tetrahydrobiopterin = (6R)-L-erythro-6,7-dihydrobiopterin + H2O. Its function is as follows. Involved in tetrahydrobiopterin biosynthesis. Interacts with and acts downstream of the E3 ubiquitin-protein ligase SDIR1 in abscisic acid (ABA) and salt stress signaling. Regulates the expression of the bZIP transcription factor ABI5, which mediates responses to ABA during seed germination and salt stress. The SDIR1-ATP1/SDIRIP1 complex plays an important role in ABA signaling through the ubiquitination pathway. Acts downstream of AIRP2 in regulation of ABA signaling during drought stress. This is Probable pterin-4-alpha-carbinolamine dehydratase, chloroplastic from Arabidopsis thaliana (Mouse-ear cress).